The chain runs to 141 residues: Large ribosomal subunit protein uL11 (141 aa).

It belongs to the universal ribosomal protein uL11 family. In terms of assembly, part of the ribosomal stalk of the 50S ribosomal subunit. Interacts with L10 and the large rRNA to form the base of the stalk. L10 forms an elongated spine to which L12 dimers bind in a sequential fashion forming a multimeric L10(L12)X complex. In terms of processing, one or more lysine residues are methylated.

Functionally, forms part of the ribosomal stalk which helps the ribosome interact with GTP-bound translation factors. This chain is Large ribosomal subunit protein uL11, found in Pelodictyon phaeoclathratiforme (strain DSM 5477 / BU-1).